The following is a 369-amino-acid chain: Dual specificity protein phosphatase 1-B (369 aa).

The Rhodanese domain occupies 21–138 (RAHKCLILDC…FSSQCPEFCN (118 aa)). Phosphothreonine; by MAPK1 is present on T168. Residues 175–316 (GPVEILPFLY…LLQFESQVLA (142 aa)) enclose the Tyrosine-protein phosphatase domain. The active-site Phosphocysteine intermediate is C260.

Belongs to the protein-tyrosine phosphatase family. Non-receptor class dual specificity subfamily. Post-translationally, phosphorylated by MAPK1/ERK2 at Thr-168 and at one or more serine residues in a progesterone-dependent manner. Phosphorylation reduces its rate of degradation but does not seem to affect phosphatase activity.

The protein localises to the nucleus. It carries out the reaction O-phospho-L-seryl-[protein] + H2O = L-seryl-[protein] + phosphate. The catalysed reaction is O-phospho-L-threonyl-[protein] + H2O = L-threonyl-[protein] + phosphate. It catalyses the reaction O-phospho-L-tyrosyl-[protein] + H2O = L-tyrosyl-[protein] + phosphate. In terms of biological role, dual specificity phosphatase that dephosphorylates MAP kinase MAPK1/ERK2 on both 'Thr-188' and 'Tyr-190', regulating its activity during the meiotic cell cycle. The chain is Dual specificity protein phosphatase 1-B from Xenopus laevis (African clawed frog).